Reading from the N-terminus, the 125-residue chain is Splicing factor 3B subunit 6 (125 aa).

The tract at residues 16–29 is interaction with pre-mRNA branch site; the sequence is EVNRILYIRNLPYK. The 76-residue stretch at 19 to 94 folds into the RRM domain; the sequence is RILYIRNLPY…RYLVVLYYNA (76 aa). N6-acetyllysine; alternate is present on Lys-29. Residue Lys-29 forms a Glycyl lysine isopeptide (Lys-Gly) (interchain with G-Cter in SUMO2); alternate linkage. An N6-acetyllysine modification is found at Lys-41.

As to quaternary structure, component of the 17S U2 SnRNP complex, a ribonucleoprotein complex that contains small nuclear RNA (snRNA) U2 and a number of specific proteins. Part of the SF3B subcomplex of the 17S U2 SnRNP complex. SF3B associates with the splicing subcomplex SF3A and a 12S RNA unit to form the U2 small nuclear ribonucleoproteins complex (U2 snRNP). Within the SF3B complex interacts directly with SF3B1. Component of the minor spliceosome, which splices U12-type introns.

Its subcellular location is the nucleus. In terms of biological role, component of the 17S U2 SnRNP complex of the spliceosome, a large ribonucleoprotein complex that removes introns from transcribed pre-mRNAs. The 17S U2 SnRNP complex (1) directly participates in early spliceosome assembly and (2) mediates recognition of the intron branch site during pre-mRNA splicing by promoting the selection of the pre-mRNA branch-site adenosine, the nucleophile for the first step of splicing. Within the 17S U2 SnRNP complex, SF3B6 is part of the SF3B subcomplex, which is required for 'A' complex assembly formed by the stable binding of U2 snRNP to the branchpoint sequence in pre-mRNA. Sequence independent binding of SF3A and SF3B subcomplexes upstream of the branch site is essential, it may anchor U2 snRNP to the pre-mRNA. Within the 17S U2 SnRNP complex, SF3B6 directly contacts the pre-mRNA branch site adenosine for the first catalytic step of splicing. SF3B6 stabilizes the intron branch site-U2 snRNA duplex, thereby promoting-binding of introns with poor sequence complementarity. Also acts as a component of the minor spliceosome, which is involved in the splicing of U12-type introns in pre-mRNAs. The protein is Splicing factor 3B subunit 6 (Sf3b6) of Mus musculus (Mouse).